The primary structure comprises 110 residues: Endoribonuclease SymE (110 aa).

Residues 29-74 form the SpoVT-AbrB domain; it reads SRYPEYTRIPAITLKGQWLEDAGFTTGTQVDVRVMNGCIVLTAQQP.

Belongs to the SymE family.

The protein resides in the cytoplasm. Involved in the degradation and recycling of damaged RNA. It is itself a target for degradation by the ATP-dependent protease Lon. In Salmonella paratyphi C (strain RKS4594), this protein is Endoribonuclease SymE.